The chain runs to 20 residues: Poneritoxin (20 aa).

At Met18 the chain carries Methionine sulfoxide; in form U1-PONTX-Dq3c. Lys19 is subject to Lysine amide; in form U1-PONTX-Dq3a and U1-PONTX-Dq3c.

In terms of processing, the peptide spanning residues 2 to 19 occurs in 3 forms and has been given 3 different names. U1-PONTX-Dq3a has an amidated Lys-19, U1-PONTX-Dq3c has an amidated Lys-19 and an oxidized Met-18, and U1-PONTX-Dq3b has no modifications at either Met-18 or Lys-19. Expressed by the venom gland.

It localises to the secreted. In terms of biological role, may have antimicrobial properties, like most ant linear peptides. The protein is Poneritoxin of Dinoponera quadriceps (South American ant).